The sequence spans 221 residues: Ependymin-2 (221 aa).

The signal sequence occupies residues 1–21; the sequence is MQDFAFAALSIWLCLGATALA. Residues N33, N73, and N97 are each glycosylated (N-linked (GlcNAc...) asparagine).

This sequence belongs to the ependymin family. Binds calcium through the terminal sialic acids. As to expression, EPDs are synthesized in the meninx and secreted in the cerebrospinal fluid.

It localises to the secreted. May play a role in neural plasticity. May be involved during axon regeneration. The protein is Ependymin-2 (epd2) of Oncorhynchus mykiss (Rainbow trout).